The chain runs to 328 residues: MSLQNLTRFPRLELIGAPTPLEYLPRLSDHLGREIFIKRDDTTPLAMGGNKLRKLEFLAADALREGADTLITAGAIQSNHVRQTAAVAAKLGLHCVALLENPIGTGAENYLSNGNRLLLDLFNTQVEMCDALTNPAEQLDELATRIEAQGYRPYVIPVGGSNALGALGYVESALEIAQQCEGAVEISSVVVASGSAGTHAGLAVGLEQLMPQAELIGVTVSRSVADQLPKVVALQQAVANSLELQAKADITLWDDYFAPGYGTPNEEGMAAVKLLAQLEGILLDPVYTGKAMAGLIDGITQKRFKDEGPILFVHTGGAPALFAYHPHL.

N6-(pyridoxal phosphate)lysine is present on K51.

It belongs to the ACC deaminase/D-cysteine desulfhydrase family. In terms of assembly, homodimer. The cofactor is pyridoxal 5'-phosphate.

It catalyses the reaction D-cysteine + H2O = hydrogen sulfide + pyruvate + NH4(+) + H(+). Catalyzes the alpha,beta-elimination reaction of D-cysteine and of several D-cysteine derivatives. It could be a defense mechanism against D-cysteine. In Klebsiella pneumoniae (strain 342), this protein is D-cysteine desulfhydrase.